The sequence spans 466 residues: Ribulose bisphosphate carboxylase large chain (466 aa).

K5 bears the N6,N6,N6-trimethyllysine mark. Substrate-binding residues include N114 and T164. Catalysis depends on K166, which acts as the Proton acceptor. A substrate-binding site is contributed by K168. The Mg(2+) site is built by K192, D194, and E195. K192 bears the N6-carboxylysine mark. The Proton acceptor role is filled by H285. Substrate-binding residues include R286, H318, and S370.

Belongs to the RuBisCO large chain family. Type I subfamily. In terms of assembly, heterohexadecamer of 8 large chains and 8 small chains. Mg(2+) serves as cofactor.

It is found in the plastid. The protein localises to the chloroplast. The enzyme catalyses 2 (2R)-3-phosphoglycerate + 2 H(+) = D-ribulose 1,5-bisphosphate + CO2 + H2O. The catalysed reaction is D-ribulose 1,5-bisphosphate + O2 = 2-phosphoglycolate + (2R)-3-phosphoglycerate + 2 H(+). Its function is as follows. RuBisCO catalyzes two reactions: the carboxylation of D-ribulose 1,5-bisphosphate, the primary event in carbon dioxide fixation, as well as the oxidative fragmentation of the pentose substrate in the photorespiration process. Both reactions occur simultaneously and in competition at the same active site. This Drosera regia (King sundew) protein is Ribulose bisphosphate carboxylase large chain.